The primary structure comprises 625 residues: Endoglucanase D (625 aa).

Residues 1-17 (SLTGVFPSGLIETKVSA) form the signal peptide. Residue Asp-177 is the Nucleophile of the active site. Residues His-492 and Asp-522 contribute to the active site. The Proton donor role is filled by Glu-531. Residues 555–625 (NEVLYGDVND…LIRVIEKLPI (71 aa)) enclose the Dockerin domain.

It belongs to the glycosyl hydrolase 9 (cellulase E) family. The cofactor is Ca(2+).

It carries out the reaction Endohydrolysis of (1-&gt;4)-beta-D-glucosidic linkages in cellulose, lichenin and cereal beta-D-glucans.. In terms of biological role, this enzyme catalyzes the endohydrolysis of 1,4-beta-glucosidic linkages in cellulose, lichenin and cereal beta-D-glucans. This Acetivibrio thermocellus (Hungateiclostridium thermocellum) protein is Endoglucanase D (celD).